The following is a 130-amino-acid chain: Flagellar assembly factor FliW (130 aa).

Belongs to the FliW family. Interacts with translational regulator CsrA and flagellin(s).

It localises to the cytoplasm. In terms of biological role, acts as an anti-CsrA protein, binds CsrA and prevents it from repressing translation of its target genes, one of which is flagellin. Binds to flagellin and participates in the assembly of the flagellum. The chain is Flagellar assembly factor FliW from Clostridioides difficile (strain 630) (Peptoclostridium difficile).